A 243-amino-acid polypeptide reads, in one-letter code: HTH-type transcriptional repressor NagR (243 aa).

Residues 9-77 (IPIYYQIMEQ…KGRGTFVSKP (69 aa)) enclose the HTH gntR-type domain. A DNA-binding region (H-T-H motif) is located at residues 37 to 56 (EREYAEQFGISRMTVRQALS). Residues 89-90 (FT), 133-135 (RVR), Glu-145, 165-167 (SIY), Glu-222, and Tyr-228 contribute to the alpha-D-glucosamine 6-phosphate site. Residues 89–90 (FT), 133–135 (RVR), Glu-145, 165–167 (SIY), Glu-222, and Tyr-228 contribute to the N-acetyl-D-glucosamine 6-phosphate site.

In terms of assembly, homodimer. Forms dimers via the C-terminal effector-binding domain. At high concentrations, probably forms polymers along the DNA.

Its activity is regulated as follows. Binding to DNA is allosterically inhibited by an effector molecule. Binding of the effector to the C-terminal domain leads to a conformational change that modulates binding to DNA and thereby regulates transcription of the target genes. Glucosamine-6-phosphate (GlcN6P) and/or N-acetylglucosamine-6-phosphate (GlcNAc6P) are putative effectors of NagR. Binding of GlcNAc6P may prevent the protein-protein interactions responsible for polymerization along the DNA, but not the specific DNA binding. Its function is as follows. Main transcriptional repressor of genes involved in N-acetylglucosamine (GlcNAc) transport and utilization. Represses the expression of the nagAB and nagP operons by binding directly within their upstream regions. Binds to the DNA consensus sequence 5'-ATTGGTATAGACAACT-3'. Also acts as a weak repressor of mapB expression. In Bacillus subtilis (strain 168), this protein is HTH-type transcriptional repressor NagR.